Reading from the N-terminus, the 207-residue chain is uncharacterized protein (207 aa).

The protein belongs to the flavoredoxin family. The cofactor is FMN.

This is an uncharacterized protein from Bacillus subtilis (strain 168).